Consider the following 322-residue polypeptide: Sideroflexin-1 (322 aa).

Residue S2 is modified to N-acetylserine. At 2 to 102 (SGEVPPNINI…MSAQVPMNMT (101 aa)) the chain is on the mitochondrial matrix side. Residues 103 to 120 (ITGCMMTFYRTTPAVLFW) form a helical membrane-spanning segment. Over 121 to 146 (QWINQSFNAVVNYTNRSGDAPLTVNE) the chain is Mitochondrial intermembrane. The helical transmembrane segment at 147-167 (LGTAYVSATTGAVATALGLNA) threads the bilayer. Topologically, residues 168 to 174 (LTKRVSP) are mitochondrial matrix. Residues 175 to 195 (LIGRFVPFAAVAAANCINIPL) traverse the membrane as a helical segment. Residues 196-228 (MRQRELKVGIPVTDENGTRLGESTNAAKQAITQ) are Mitochondrial intermembrane-facing. Residues 229–249 (VVISRILMAAPGMAIPPFIMN) traverse the membrane as a helical segment. Residues 250-266 (TLEKKAFLKRFPWMSAP) lie on the Mitochondrial matrix side of the membrane. The chain crosses the membrane as a helical span at residues 267 to 287 (IQVTLVGFCLVFATPLCCALF). Residues 288–322 (PQKSSMSVTSLEDELQASIQRTHPEIRRVYFNKGL) are Mitochondrial intermembrane-facing.

The protein belongs to the sideroflexin family. Widely expressed, with highest expression in kidney and liver.

It is found in the mitochondrion inner membrane. It catalyses the reaction L-serine(in) = L-serine(out). The catalysed reaction is L-alanine(in) = L-alanine(out). It carries out the reaction L-cysteine(in) = L-cysteine(out). Functionally, amino acid transporter importing serine, an essential substrate of the mitochondrial branch of the one-carbon pathway, into mitochondria. Mitochondrial serine is then converted to glycine and formate, which exits to the cytosol where it is used to generate the charged folates that serve as one-carbon donors. May also transport other amino acids including alanine and cysteine. The polypeptide is Sideroflexin-1 (Mus musculus (Mouse)).